The chain runs to 340 residues: Speriolin-like protein (340 aa).

2 disordered regions span residues 42–73 (GGGHDLLPPRAHAYPEAGSPGSGVPDFGRFTS) and 94–135 (APLS…KLSP). Residue Ser60 is modified to Phosphoserine. The segment covering 123-133 (PHSHRGTDRKL) has biased composition (basic and acidic residues). Ser134 carries the post-translational modification Phosphoserine.

This sequence belongs to the speriolin family.

The protein resides in the cytoplasm. The protein is Speriolin-like protein (SPATC1L) of Homo sapiens (Human).